A 207-amino-acid chain; its full sequence is Large ribosomal subunit protein uL4 (207 aa).

A disordered region spans residues 44-85 (MRQGTHKTKNRAEVSGGGRKPWRQKGTGRARQGSIRSPQWRG).

The protein belongs to the universal ribosomal protein uL4 family. As to quaternary structure, part of the 50S ribosomal subunit.

Its function is as follows. One of the primary rRNA binding proteins, this protein initially binds near the 5'-end of the 23S rRNA. It is important during the early stages of 50S assembly. It makes multiple contacts with different domains of the 23S rRNA in the assembled 50S subunit and ribosome. Forms part of the polypeptide exit tunnel. This Geobacillus thermodenitrificans (strain NG80-2) protein is Large ribosomal subunit protein uL4.